Here is a 428-residue protein sequence, read N- to C-terminus: Cell division cycle 20.6, cofactor of APC complex (428 aa).

WD repeat units lie at residues 106–145 (WFLT…TSKL), 150–189 (DENG…HVRT), 193–230 (GHES…SIIG), 234–273 (GHTE…SNPT), 282–324 (EHTA…CLNS), 326–367 (ETGS…KMAE), and 370–409 (GHTS…PKTT).

The protein belongs to the WD repeat CDC20/Fizzy family. In terms of assembly, the APC/C is composed of at least 11 subunits that stay tightly associated throughout the cell cycle.

Its subcellular location is the nucleus. It functions in the pathway protein modification; protein ubiquitination. Component of the anaphase promoting complex/cyclosome (APC/C), a cell cycle-regulated E3 ubiquitin-protein ligase complex that controls progression through mitosis and the G1 phase of the cell cycle. This is Cell division cycle 20.6, cofactor of APC complex (CDC20-6) from Arabidopsis thaliana (Mouse-ear cress).